The chain runs to 625 residues: Beta-galactosidase large subunit (625 aa).

The Proton donor role is filled by Glu-465. Catalysis depends on Glu-533, which acts as the Nucleophile.

It belongs to the glycosyl hydrolase 2 family. In terms of assembly, heterodimer of a large (LacL) and a small subunit (LacM).

The catalysed reaction is Hydrolysis of terminal non-reducing beta-D-galactose residues in beta-D-galactosides.. In terms of biological role, component of a beta-galactosidase. The sequence is that of Beta-galactosidase large subunit from Latilactobacillus sakei (Lactobacillus sakei).